The sequence spans 277 residues: Large ribosomal subunit protein uL2 (277 aa).

Residues 219 to 277 (TVRGSVMNPNDHPHGGGEGRAPIGRKSPMSPWGKPTLGFKTRKKKNKSDKFIVRRRKNK) form a disordered region. Positions 258 to 277 (KTRKKKNKSDKFIVRRRKNK) are enriched in basic residues.

This sequence belongs to the universal ribosomal protein uL2 family. As to quaternary structure, part of the 50S ribosomal subunit. Forms a bridge to the 30S subunit in the 70S ribosome.

One of the primary rRNA binding proteins. Required for association of the 30S and 50S subunits to form the 70S ribosome, for tRNA binding and peptide bond formation. It has been suggested to have peptidyltransferase activity; this is somewhat controversial. Makes several contacts with the 16S rRNA in the 70S ribosome. The sequence is that of Large ribosomal subunit protein uL2 from Bacillus subtilis (strain 168).